A 594-amino-acid chain; its full sequence is Chondroitin sulfate proteoglycan 5 (594 aa).

Residues 1–12 show a composition bias toward polar residues; sequence MGVGGTSASDTA. The first 18 residues, 1 to 18, serve as a signal peptide directing secretion; sequence MGVGGTSASDTALSLCPT. 2 disordered regions span residues 1–325 and 343–418; these read MGVG…PWGL and TTSF…SECR. The Extracellular portion of the chain corresponds to 19–481; sequence APEWPPRNGS…AIVTDFQVLC (463 aa). Residues Asn-26 and Asn-44 are each glycosylated (N-linked (GlcNAc...) asparagine). The span at 140-181 shows a compositional bias: low complexity; that stretch reads SPGLGLSSPGPNLGLPSLDLPNPNLGLPDPNLGLPNPSLGLP. 2 stretches are compositionally biased toward pro residues: residues 182–195 and 219–229; these read SPGP…PNPN and IPLPSPSPGPG. A compositionally biased stretch (low complexity) spans 248 to 259; that stretch reads PQPSSSPAPAQR. Residues 298–310 show a composition bias toward gly residues; that stretch reads GGHGPGGGHGAGG. The interval 338–377 is interaction with TNC and TNR; the sequence is ADFYPTTSFYAEGDDDAEEELEEDEEEEEEEDGGLEDENG. Residues 349–375 are compositionally biased toward acidic residues; sequence EGDDDAEEELEEDEEEEEEEDGGLEDE. Asn-413 and Asn-425 each carry an N-linked (GlcNAc...) asparagine glycan. One can recognise an EGF-like domain in the interval 429–471; the sequence is RSVCDLVPSYCHNGGQCYLVESHGAFCRCNTQDYTWHKGTRCE. Cystine bridges form between Cys-432/Cys-445, Cys-439/Cys-455, and Cys-457/Cys-470. The chain crosses the membrane as a helical span at residues 482–502; it reads VAVGSAALVLLLLFMLTVFFA. Topologically, residues 503 to 594 are cytoplasmic; sequence KKLYLLKTEN…GVPCLHNNLG (92 aa). The interval 535-594 is disordered; sequence TIAEGSHPNDDPGAPHKLQDPLKPGLKDEEPLSILSTAPEEGSKGEPGGCGVPCLHNNLG. Basic and acidic residues predominate over residues 541 to 564; sequence HPNDDPGAPHKLQDPLKPGLKDEE.

Binds TNC and TNR. The 80 kDa form but not the 140 kDa form can bind TNC and TNR when expressed at the cell surface. In terms of processing, different forms exist: the 140 kDa form (also reported as 130 kDa), which probably consists of the entire protein, and the 38 and 80 kDa forms, which are probably cleaved in their N-terminus. Increase in synaptic activity, results in shedding of the extracellular domain and expression at the cell surface of a 38 kDa form. A form of 200 kDa has also been reported, which is probably hyperglycosylated. N-glycosylated. Post-translationally, O-glycosylated; contains chondroitin sulfate glycans. Part-time proteoglycan, the 200 kDa form is the only one containing chondroitin sulfate glycans. As to expression, expressed in astroglial and neuronal surfaces in different parts of the embryonic brain. Expressed in adult brain and retina (at protein level).

The protein localises to the cell membrane. Its function is as follows. May function as a growth and differentiation factor involved in neuritogenesis and more particularly in neurite extension. The chain is Chondroitin sulfate proteoglycan 5 (CSPG5) from Gallus gallus (Chicken).